Reading from the N-terminus, the 384-residue chain is Homoserine O-succinyltransferase (384 aa).

Positions 51-361 constitute an AB hydrolase-1 domain; the sequence is NAILICHALS…ETSQGHDAFL (311 aa). Serine 157 functions as the Nucleophile in the catalytic mechanism. Arginine 227 lines the substrate pocket. Active-site residues include aspartate 324 and histidine 357. Aspartate 358 contacts substrate.

Belongs to the AB hydrolase superfamily. MetX family. In terms of assembly, homodimer.

The protein resides in the cytoplasm. The enzyme catalyses L-homoserine + succinyl-CoA = O-succinyl-L-homoserine + CoA. The protein operates within amino-acid biosynthesis; L-methionine biosynthesis via de novo pathway; O-succinyl-L-homoserine from L-homoserine: step 1/1. Its function is as follows. Transfers a succinyl group from succinyl-CoA to L-homoserine, forming succinyl-L-homoserine. The chain is Homoserine O-succinyltransferase from Alkalilimnicola ehrlichii (strain ATCC BAA-1101 / DSM 17681 / MLHE-1).